The chain runs to 108 residues: Cyclin-dependent protein kinase inhibitor SMR13 (108 aa).

Probable cyclin-dependent protein kinase (CDK) inhibitor that functions as a repressor of mitosis in the endoreduplication cell cycle. This chain is Cyclin-dependent protein kinase inhibitor SMR13, found in Arabidopsis thaliana (Mouse-ear cress).